The sequence spans 824 residues: Leucine--tRNA ligase (824 aa).

The 'HIGH' region signature appears at 42–52; it reads PYPSGRIHMGH. A 'KMSKS' region motif is present at residues 581–585; it reads KMSKS. Lysine 584 contributes to the ATP binding site.

This sequence belongs to the class-I aminoacyl-tRNA synthetase family.

The protein localises to the cytoplasm. The catalysed reaction is tRNA(Leu) + L-leucine + ATP = L-leucyl-tRNA(Leu) + AMP + diphosphate. The chain is Leucine--tRNA ligase from Geotalea uraniireducens (strain Rf4) (Geobacter uraniireducens).